Here is a 347-residue protein sequence, read N- to C-terminus: Quinolinate synthase (347 aa).

Residues histidine 47 and serine 68 each contribute to the iminosuccinate site. Cysteine 113 serves as a coordination point for [4Fe-4S] cluster. Residues 139-141 (YAN) and serine 156 each bind iminosuccinate. Residue cysteine 200 participates in [4Fe-4S] cluster binding. Residues 226-228 (HPE) and threonine 243 contribute to the iminosuccinate site. Cysteine 297 contributes to the [4Fe-4S] cluster binding site.

The protein belongs to the quinolinate synthase family. Type 1 subfamily. The cofactor is [4Fe-4S] cluster.

It localises to the cytoplasm. The enzyme catalyses iminosuccinate + dihydroxyacetone phosphate = quinolinate + phosphate + 2 H2O + H(+). Its pathway is cofactor biosynthesis; NAD(+) biosynthesis; quinolinate from iminoaspartate: step 1/1. Its function is as follows. Catalyzes the condensation of iminoaspartate with dihydroxyacetone phosphate to form quinolinate. This Escherichia coli O7:K1 (strain IAI39 / ExPEC) protein is Quinolinate synthase.